Reading from the N-terminus, the 364-residue chain is Probable tartrate dehydrogenase/decarboxylase TtuC (364 aa).

Positions 222, 246, and 250 each coordinate Mn(2+).

This sequence belongs to the isocitrate and isopropylmalate dehydrogenases family. The cofactor is Mg(2+). Mn(2+) is required as a cofactor. It depends on K(+) as a cofactor.

It localises to the cytoplasm. It carries out the reaction tartrate + NAD(+) = 2-hydroxy-3-oxosuccinate + NADH + H(+). The enzyme catalyses (2R,3S)-tartrate + NAD(+) = 2-hydroxy-3-oxosuccinate + NADH + H(+). The catalysed reaction is (2R,3R)-tartrate + NAD(+) = 2-hydroxy-3-oxosuccinate + NADH + H(+). It catalyses the reaction (2R,3R)-tartrate + H(+) = (R)-glycerate + CO2. It carries out the reaction (R)-malate + NAD(+) = pyruvate + CO2 + NADH. It participates in carbohydrate acid metabolism; tartrate degradation; 2-hydroxy-3-oxosuccinate from L-tartrate: step 1/1. The protein operates within carbohydrate acid metabolism; tartrate degradation; 2-hydroxy-3-oxosuccinate from meso-tartrate: step 1/1. It functions in the pathway carbohydrate acid metabolism; tartrate degradation; D-glycerate from L-tartrate: step 1/1. In terms of biological role, has multiple catalytic activities. Apart from catalyzing the oxidation of (+)-tartrate to oxaloglycolate, also converts meso-tartrate to D-glycerate and catalyzes the oxidative decarboxylation of D-malate to pyruvate. The polypeptide is Probable tartrate dehydrogenase/decarboxylase TtuC (ttuC) (Agrobacterium vitis (Rhizobium vitis)).